Here is a 306-residue protein sequence, read N- to C-terminus: Protoheme IX farnesyltransferase (306 aa).

9 helical membrane-spanning segments follow: residues 32–52, 57–77, 108–128, 129–149, 157–177, 183–203, 230–250, 252–272, and 285–305; these read VVQLIVFCAFIGMVLAVPGMP, WALMAVASAGIWLVAGAAAAF, LLFSALLCAAGSALLYWWVNP, LTMWLTFATFVGYAVIYTVIL, IVIGGASGAMPPVLGWAAMTG, ALILFLIIFLWTPPHFWALAL, VFLYTLILFAGCLMPFVYGMS, WIYLAAAVVLSAGFCLYGFRL, and FRFSLIHLSLLFAALLVDHYL.

It belongs to the UbiA prenyltransferase family. Protoheme IX farnesyltransferase subfamily.

The protein resides in the cell inner membrane. The catalysed reaction is heme b + (2E,6E)-farnesyl diphosphate + H2O = Fe(II)-heme o + diphosphate. Its pathway is porphyrin-containing compound metabolism; heme O biosynthesis; heme O from protoheme: step 1/1. Its function is as follows. Converts heme B (protoheme IX) to heme O by substitution of the vinyl group on carbon 2 of heme B porphyrin ring with a hydroxyethyl farnesyl side group. This Acidovorax ebreus (strain TPSY) (Diaphorobacter sp. (strain TPSY)) protein is Protoheme IX farnesyltransferase.